Reading from the N-terminus, the 181-residue chain is Acireductone dioxygenase (181 aa).

Fe(2+)-binding residues include His-97, His-99, Glu-103, and His-141. Positions 97, 99, 103, and 141 each coordinate Ni(2+).

The protein belongs to the acireductone dioxygenase (ARD) family. In terms of assembly, monomer. It depends on Fe(2+) as a cofactor. Requires Ni(2+) as cofactor.

The catalysed reaction is 1,2-dihydroxy-5-(methylsulfanyl)pent-1-en-3-one + O2 = 3-(methylsulfanyl)propanoate + CO + formate + 2 H(+). The enzyme catalyses 1,2-dihydroxy-5-(methylsulfanyl)pent-1-en-3-one + O2 = 4-methylsulfanyl-2-oxobutanoate + formate + 2 H(+). Its pathway is amino-acid biosynthesis; L-methionine biosynthesis via salvage pathway; L-methionine from S-methyl-5-thio-alpha-D-ribose 1-phosphate: step 5/6. Catalyzes 2 different reactions between oxygen and the acireductone 1,2-dihydroxy-3-keto-5-methylthiopentene (DHK-MTPene) depending upon the metal bound in the active site. Fe-containing acireductone dioxygenase (Fe-ARD) produces formate and 2-keto-4-methylthiobutyrate (KMTB), the alpha-ketoacid precursor of methionine in the methionine recycle pathway. Ni-containing acireductone dioxygenase (Ni-ARD) produces methylthiopropionate, carbon monoxide and formate, and does not lie on the methionine recycle pathway. This chain is Acireductone dioxygenase, found in Pseudomonas syringae pv. syringae (strain B728a).